The following is a 157-amino-acid chain: Putative electron transport protein YsaA (157 aa).

4Fe-4S ferredoxin-type domains follow at residues 2 to 32 (NRFI…NQDC), 48 to 80 (KDHC…REHG), 80 to 109 (GHIF…VVSS), and 112 to 144 (KARA…CMDV). Positions 12, 15, 18, 22, 58, 61, 66, 70, 89, 92, 95, 99, 118, 121, 130, and 134 each coordinate [4Fe-4S] cluster.

This is Putative electron transport protein YsaA (ysaA) from Escherichia coli (strain K12).